Consider the following 118-residue polypeptide: Large ribosomal subunit protein bL20 (118 aa).

Belongs to the bacterial ribosomal protein bL20 family.

Its function is as follows. Binds directly to 23S ribosomal RNA and is necessary for the in vitro assembly process of the 50S ribosomal subunit. It is not involved in the protein synthesizing functions of that subunit. This Caldicellulosiruptor saccharolyticus (strain ATCC 43494 / DSM 8903 / Tp8T 6331) protein is Large ribosomal subunit protein bL20.